The primary structure comprises 107 residues: Diuretic hormone 45 (107 aa).

Positions 1-44 (LYAMSPMAARYSAGAPWLYLLADMPRDSQRLVDPADLHEGRARP) are excised as a propeptide. At Val91 the chain carries Valine amide.

As to expression, expressed in corpora cardiaca (CC), corpora allata (CA), antennal lobe (AL) and gnathal ganglion (GNG) (at protein level). Expression in AL and GNG detected in some animals, in CC and CA in few animals (at protein level).

It localises to the secreted. In terms of biological role, regulation of fluid secretion. The sequence is that of Diuretic hormone 45 from Agrotis ipsilon (Black cutworm moth).